Reading from the N-terminus, the 131-residue chain is Large ribosomal subunit protein bL12c (131 aa).

Belongs to the bacterial ribosomal protein bL12 family. In terms of assembly, homodimer. Part of the ribosomal stalk of the 50S ribosomal subunit. Forms a multimeric L10(L12)X complex, where L10 forms an elongated spine to which 2 to 4 L12 dimers bind in a sequential fashion. Binds GTP-bound translation factors.

It localises to the plastid. The protein localises to the chloroplast. Functionally, forms part of the ribosomal stalk which helps the ribosome interact with GTP-bound translation factors. Is thus essential for accurate translation. In Euglena gracilis, this protein is Large ribosomal subunit protein bL12c.